An 883-amino-acid chain; its full sequence is MEATAGSETESGGDTVTAECANRIPVPRPPSIEEFTIVKPISRGAFGKVYLGQKGGKLYAVKVVKKADMINKNMTHQVQAERDALALSKSPFIVHLYYSLQSANNVYLVMEYLIGGDVKSLLHIYGYFDEEMAVKYISEVALALDYLHRHGIIHRDLKPDNMLISNEGHIKLTDFGLSKITLNRDIDINMMDILTTPSMAKPRQDYSRTPGQVLSLISSLRFYTPAAEKDKDSANILSTHVFETSQLSQGLICPMSVDHRDTTPYSSKLLHSCLETVTSDPGMPVKCLTSNLLQSRRRLATSSASSQSHTFLSSVESECHSSPRWEKDCQESDDALGSTVMSWNIIEKSSCTKSTDAIETKGFNKKDFELTLSPIHNSSIIPATGSSCVNLAKKCFPGEVSWEARELDINNVNVATDTTRCVFHQSDQWVVDPSDGTEEYCGKRGFKRNSELVDSSPCQNIIQNKKNCIEHKSRNEKSNGYINQRTSLTNEVQDLKLSVCESQQSDCANKENMVNSSIDKQQTPEKSPIPMIAKNLMCELDEDCNKNNKKFLSSSFLGSDDERASKSICMDSDSSFPGISIMESSLERQSLDPDKSIRESSFEESNIEDLLAVSPSWQENPLPKDDENLAVQASSQKMLASSSDVLKTLTLSKRNAVAFRSFNSHINASNNSEPSKMSVTSLDAMDISCVYSGSYPMAITPSQKGISYVPYQQTPNQVKSETPYRTPKSVRRGAAPVDDARILGTPDYLAPELLLGRAHGPAVDWWALGVCLFEFLTGIPPFNDETSQQVFQNILKRDIPWPEGEEKLSDNAQNAVEILLTIDNAKRAGIKELKCHPLFSDVDWENLQHQTMPFIPQPDDETDTSYFEARNNAQHLTVSGFSL.

Met-1 carries the post-translational modification N-acetylmethionine. One can recognise a Protein kinase domain in the interval 35-839 (FTIVKPISRG…IKELKCHPLF (805 aa)). ATP contacts are provided by residues 41 to 49 (ISRGAFGKV) and Lys-62. Asp-156 acts as the Proton acceptor in catalysis. Thr-209 and Thr-224 each carry phosphothreonine. Ser-295, Ser-373, and Ser-456 each carry phosphoserine. Residue Thr-523 is modified to Phosphothreonine. Residues Ser-555, Ser-559, Ser-634, Ser-661, and Ser-672 each carry the phosphoserine modification. Thr-726 bears the Phosphothreonine mark. Residue Ser-729 is modified to Phosphoserine. Phosphothreonine; by CDK1 is present on Thr-745. Residues 840 to 883 (SDVDWENLQHQTMPFIPQPDDETDTSYFEARNNAQHLTVSGFSL) form the AGC-kinase C-terminal domain. Ser-879 and Ser-882 each carry phosphoserine.

This sequence belongs to the protein kinase superfamily. AGC Ser/Thr protein kinase family. Phosphorylation at Thr-745 by CDK1 during M phase activates its kinase activity. Maximum phosphorylation occurs in prometaphase.

It localises to the cytoplasm. It is found in the cytoskeleton. The protein localises to the microtubule organizing center. The protein resides in the centrosome. Its subcellular location is the nucleus. The enzyme catalyses L-seryl-[protein] + ATP = O-phospho-L-seryl-[protein] + ADP + H(+). The catalysed reaction is L-threonyl-[protein] + ATP = O-phospho-L-threonyl-[protein] + ADP + H(+). In terms of biological role, serine/threonine kinase that plays a key role in M phase by acting as a regulator of mitosis entry and maintenance. Acts by promoting the inactivation of protein phosphatase 2A (PP2A) during M phase: does not directly inhibit PP2A but acts by mediating phosphorylation and subsequent activation of ARPP19 and ENSA at 'Ser-62' and 'Ser-67', respectively. ARPP19 and ENSA are phosphatase inhibitors that specifically inhibit the PPP2R2D (PR55-delta) subunit of PP2A. Inactivation of PP2A during M phase is essential to keep cyclin-B1-CDK1 activity high. Following DNA damage, it is also involved in checkpoint recovery by being inhibited. The sequence is that of Serine/threonine-protein kinase greatwall (MASTL) from Canis lupus familiaris (Dog).